Here is a 337-residue protein sequence, read N- to C-terminus: Aspartate carbamoyltransferase catalytic subunit (337 aa).

The carbamoyl phosphate site is built by Arg-54 and Thr-55. Position 82 (Lys-82) interacts with L-aspartate. 3 residues coordinate carbamoyl phosphate: Arg-104, His-134, and Gln-137. The L-aspartate site is built by Arg-177 and Arg-232. Residues Gly-277 and Pro-278 each coordinate carbamoyl phosphate.

This sequence belongs to the aspartate/ornithine carbamoyltransferase superfamily. ATCase family. As to quaternary structure, heterododecamer (2C3:3R2) of six catalytic PyrB chains organized as two trimers (C3), and six regulatory PyrI chains organized as three dimers (R2).

The enzyme catalyses carbamoyl phosphate + L-aspartate = N-carbamoyl-L-aspartate + phosphate + H(+). Its pathway is pyrimidine metabolism; UMP biosynthesis via de novo pathway; (S)-dihydroorotate from bicarbonate: step 2/3. Functionally, catalyzes the condensation of carbamoyl phosphate and aspartate to form carbamoyl aspartate and inorganic phosphate, the committed step in the de novo pyrimidine nucleotide biosynthesis pathway. The polypeptide is Aspartate carbamoyltransferase catalytic subunit (Arthrobacter sp. (strain FB24)).